Here is a 91-residue protein sequence, read N- to C-terminus: Putative defensin-like protein 145 (91 aa).

Residues Met-1–Gly-26 form the signal peptide. N-linked (GlcNAc...) asparagine glycosylation is found at Asn-35 and Asn-68. 4 disulfide bridges follow: Cys-39/Cys-84, Cys-52/Cys-74, Cys-57/Cys-78, and Cys-61/Cys-80.

This sequence belongs to the DEFL family.

It is found in the secreted. This chain is Putative defensin-like protein 145 (LCR2), found in Arabidopsis thaliana (Mouse-ear cress).